The primary structure comprises 819 residues: Lysine-specific demethylase JMJ18 (819 aa).

The disordered stretch occupies residues 1–39 (MENPPLESEIKEDMSLKNHPPDKDKDKDTIMEQPSSPRH). Over residues 8–30 (SEIKEDMSLKNHPPDKDKDKDTI) the composition is skewed to basic and acidic residues. One can recognise a JmjN domain in the interval 59–100 (APVFTPSLEEFVDPLAYIEKIRPLAEPYGICRIIPPSTWKPP). The disordered stretch occupies residues 120-171 (TVDLLQNREPMKKKPKSRKRKRRRNSRMGSSKRRSGSSPAESTSSPEAEEKF). The short motif at 130 to 137 (MKKKPKSR) is the Nuclear localization signal element. Basic residues predominate over residues 130–154 (MKKKPKSRKRKRRRNSRMGSSKRRS). Residues 155–165 (GSSPAESTSSP) are compositionally biased toward low complexity. A JmjC domain is found at 261–427 (QYTLSGWNLN…HGQNAVELYS (167 aa)). Positions 307, 309, and 395 each coordinate Fe cation. Zn(2+)-binding residues include Cys-519, Cys-522, Cys-533, Cys-535, Cys-542, His-545, Cys-550, and Cys-552. A C5HC2 zinc finger spans residues 519 to 571 (CFSCFYDLHLSASGCKCSPEEYACLKHADDLCSCDVKDGFILLRYTMDELSSL). The FYR N-terminal domain occupies 644–702 (ASENLGVSVEPINLGFLIFGKLWCNKYAIFPKGFRSRVKFYNVLDPTRMSNYISEVLDA). An FYR C-terminal domain is found at 704 to 788 (LMGPLFRVTL…HRLVEYWNHK (85 aa)).

It belongs to the JARID1 histone demethylase family. Requires Fe(2+) as cofactor. Expressed in vascular tissues of roots, cotyledons, leaves and flowers. Expressed predominantly in phloem companion cells of roots. Present in inflorescences, roots, siliques, leaves and stems.

It is found in the nucleus. The enzyme catalyses N(6),N(6),N(6)-trimethyl-L-lysyl(4)-[histone H3] + 2-oxoglutarate + O2 = N(6),N(6)-dimethyl-L-lysyl(4)-[histone H3] + formaldehyde + succinate + CO2. It carries out the reaction N(6),N(6)-dimethyl-L-lysyl(4)-[histone H3] + 2-oxoglutarate + O2 = N(6)-methyl-L-lysyl(4)-[histone H3] + formaldehyde + succinate + CO2. Functionally, histone demethylase that demethylates 'Lys-4' (H3K4me) of histone H3 with a specific activity for H3K4me3 and H3K4me2. No activity on H3K9me3/2, H3K27me3/2 and H3K36me3/2. Involved in the control of flowering time by demethylating H3K4me3 at the FLC locus and repressing its expression. The repression of FLC level and reduction in H3K4me3 at the FLC locus results in induction of the flowering activator FT, which is a downstream target of FLC. The protein is Lysine-specific demethylase JMJ18 of Arabidopsis thaliana (Mouse-ear cress).